Consider the following 160-residue polypeptide: uncharacterized protein (160 aa).

The segment covering 1-31 (METEKPNTDVKVAQDLEKLKLDEKHKDEKKD) has biased composition (basic and acidic residues). The interval 1-160 (METEKPNTDV…DKKDKEHKKE (160 aa)) is disordered. The stretch at 20 to 111 (KLDEKHKDEK…KSKLEGKKDK (92 aa)) forms a coiled coil. The segment covering 32–42 (KKDKKDKKDKK) has biased composition (basic residues). The segment covering 43-160 (DKKEKTPEEI…DKKDKEHKKE (118 aa)) has biased composition (basic and acidic residues).

This is an uncharacterized protein from Dictyostelium discoideum (Social amoeba).